The chain runs to 276 residues: Rhomboid-type serine protease 2 (276 aa).

The next 5 membrane-spanning stretches (helical) occupy residues 27-47 (LPLF…LTLV), 77-97 (FPFI…FTPL), 109-129 (TSVA…YVFV), 132-152 (FILH…LLLG), and 175-195 (WITP…SSFL). Ser144 functions as the Nucleophile in the catalytic mechanism. Residue His197 is part of the active site. Residues 198 to 218 (LAGLLVGYGFGLGYLKFLAPP) form a helical membrane-spanning segment.

The protein belongs to the peptidase S54 family.

The protein localises to the golgi apparatus membrane. Its subcellular location is the golgi apparatus. The protein resides in the cis-Golgi network membrane. It catalyses the reaction Cleaves type-1 transmembrane domains using a catalytic dyad composed of serine and histidine that are contributed by different transmembrane domains.. Functionally, probable rhomboid-type serine protease that catalyzes intramembrane proteolysis. The protein is Rhomboid-type serine protease 2 (rbd-2) of Neurospora crassa (strain ATCC 24698 / 74-OR23-1A / CBS 708.71 / DSM 1257 / FGSC 987).